The following is a 341-amino-acid chain: Cell division protein ZipA (341 aa).

The Periplasmic portion of the chain corresponds to methionine 1 to leucine 6. A helical membrane pass occupies residues valine 7–isoleucine 27. The Cytoplasmic segment spans residues arginine 28–serine 341. 2 disordered regions span residues leucine 35–serine 134 and glutamine 157–glutamate 201. Residues threonine 90–serine 100 show a composition bias toward polar residues. Low complexity predominate over residues serine 175–valine 190. Pro residues predominate over residues glutamate 192–glutamate 201.

It belongs to the ZipA family. In terms of assembly, interacts with FtsZ via their C-terminal domains.

The protein localises to the cell inner membrane. Its function is as follows. Essential cell division protein that stabilizes the FtsZ protofilaments by cross-linking them and that serves as a cytoplasmic membrane anchor for the Z ring. Also required for the recruitment to the septal ring of downstream cell division proteins. This chain is Cell division protein ZipA, found in Shewanella sediminis (strain HAW-EB3).